The sequence spans 561 residues: Hemolysin transporter protein HpmB (561 aa).

Positions Met1 to Ser17 are cleaved as a signal peptide. In terms of domain architecture, POTRA spans Leu77 to Gly150.

The protein belongs to the TPS (TC 1.B.20) family.

It localises to the cell outer membrane. Interacts with the cell-bound hemolysin. Necessary for the extracellular secretion and activation of the hemolysin. Its function is as follows. Probable member of a two partner secretion pathway (TPS) in which it mediates the secretion of hemolysin. The protein is Hemolysin transporter protein HpmB (hpmB) of Proteus mirabilis.